The sequence spans 309 residues: N(5)-(carboxyethyl)ornithine synthase (309 aa).

The pyruvate site is built by arginine 15, lysine 71, and histidine 92. 171–176 (GSGNVA) provides a ligand contact to NADP(+).

Belongs to the AlaDH/PNT family. CEOS subfamily. As to quaternary structure, homotetramer.

It catalyses the reaction N(5)-[1(S)-1-carboxyethyl]-L-ornithine + NADP(+) + H2O = L-ornithine + pyruvate + NADPH + H(+). Catalyzes the NADPH-dependent reductive condensation between pyruvic acid and the side chain amino group of L-ornithine to form N(5)-(L-1-carboxyethyl)-L-ornithine. To a lesser extent, can also use L-lysine as substrate (yielding N(6)-(L-1-carboxyethyl)-L-lysine). This chain is N(5)-(carboxyethyl)ornithine synthase (ceo), found in Lactococcus lactis subsp. lactis (strain IL1403) (Streptococcus lactis).